The chain runs to 97 residues: Putative membrane protein insertion efficiency factor (97 aa).

Residues 77 to 97 (VPDAPASPSPSSSCSCKGPHP) are disordered. Positions 85–97 (SPSSSCSCKGPHP) are enriched in low complexity.

Belongs to the UPF0161 family.

The protein resides in the cell inner membrane. Could be involved in insertion of integral membrane proteins into the membrane. This is Putative membrane protein insertion efficiency factor from Xanthomonas euvesicatoria pv. vesicatoria (strain 85-10) (Xanthomonas campestris pv. vesicatoria).